The following is a 247-amino-acid chain: tRNA uridine(34) hydroxylase (247 aa).

Residues 124-218 (TKQNVIVIDT…YLEDTHNKNN (95 aa)) enclose the Rhodanese domain. Residue C178 is the Cysteine persulfide intermediate of the active site.

The protein belongs to the TrhO family.

The enzyme catalyses uridine(34) in tRNA + AH2 + O2 = 5-hydroxyuridine(34) in tRNA + A + H2O. Catalyzes oxygen-dependent 5-hydroxyuridine (ho5U) modification at position 34 in tRNAs. The protein is tRNA uridine(34) hydroxylase of Rickettsia typhi (strain ATCC VR-144 / Wilmington).